Here is a 71-residue protein sequence, read N- to C-terminus: MAAAKGKKGAKAPSTKKSDYYKVEGNSVTRTKKACPKCGAGVFMAEHLNRYACGKCGFLEYKKNEKTEEQE.

4 residues coordinate Zn(2+): Cys35, Cys38, Cys53, and Cys56. Residues Cys35–Cys56 form a C4-type zinc finger.

It belongs to the eukaryotic ribosomal protein eS31 family. In terms of assembly, part of the 30S ribosomal subunit. Zn(2+) serves as cofactor.

In Methanococcus vannielii (strain ATCC 35089 / DSM 1224 / JCM 13029 / OCM 148 / SB), this protein is Small ribosomal subunit protein eS31.